The sequence spans 178 residues: Ribosome maturation factor RimM (178 aa).

In terms of domain architecture, PRC barrel spans 98-178; the sequence is DGEYYWNQLE…RILVDWDPEF (81 aa).

Belongs to the RimM family. As to quaternary structure, binds ribosomal protein uS19.

It localises to the cytoplasm. An accessory protein needed during the final step in the assembly of 30S ribosomal subunit, possibly for assembly of the head region. Essential for efficient processing of 16S rRNA. May be needed both before and after RbfA during the maturation of 16S rRNA. It has affinity for free ribosomal 30S subunits but not for 70S ribosomes. The sequence is that of Ribosome maturation factor RimM from Cellvibrio japonicus (strain Ueda107) (Pseudomonas fluorescens subsp. cellulosa).